Here is a 237-residue protein sequence, read N- to C-terminus: MNQRNMSIINSTPVRVIAIVGCDGSGKSTLTASLVNELAARMPTEHIYLGQSSGRIGEWISQLPVIGAPFGRYLRSKAAHVHEKPSTPPGNITALVIYLLSCWRAYKFRKMLCKSQQGFLLITDRYPQVEVPGFRFDGPQLAKTTGGNGWIKMLRQRELKLYQWMASYLPVLLIRLGIDEQTAFARKPDHQLAALQEKIAVTPQLTFNGAKILELDGRHPADEILQASLRAIHAALS.

Residue 21 to 28 coordinates ATP; sequence GCDGSGKS.

The protein to E.coli YghR and YghT.

This is an uncharacterized protein from Escherichia coli (strain K12).